Here is a 253-residue protein sequence, read N- to C-terminus: Acetylglutamate kinase (253 aa).

Residues Gly-40–Gly-41, Arg-62, and Asn-154 each bind substrate.

Belongs to the acetylglutamate kinase family. ArgB subfamily.

The protein resides in the cytoplasm. The enzyme catalyses N-acetyl-L-glutamate + ATP = N-acetyl-L-glutamyl 5-phosphate + ADP. It participates in amino-acid biosynthesis; L-arginine biosynthesis; N(2)-acetyl-L-ornithine from L-glutamate: step 2/4. Functionally, catalyzes the ATP-dependent phosphorylation of N-acetyl-L-glutamate. This Staphylococcus saprophyticus subsp. saprophyticus (strain ATCC 15305 / DSM 20229 / NCIMB 8711 / NCTC 7292 / S-41) protein is Acetylglutamate kinase.